A 373-amino-acid polypeptide reads, in one-letter code: Peptide chain release factor 2 (373 aa).

At Q252 the chain carries N5-methylglutamine.

It belongs to the prokaryotic/mitochondrial release factor family. Methylated by PrmC. Methylation increases the termination efficiency of RF2.

It localises to the cytoplasm. In terms of biological role, peptide chain release factor 2 directs the termination of translation in response to the peptide chain termination codons UGA and UAA. The protein is Peptide chain release factor 2 of Staphylococcus saprophyticus subsp. saprophyticus (strain ATCC 15305 / DSM 20229 / NCIMB 8711 / NCTC 7292 / S-41).